A 222-amino-acid polypeptide reads, in one-letter code: Ras-related protein Rab-41 (222 aa).

Residues S41, V42, G43, K44, T45, S46, and T63 each contribute to the GTP site. Residue T45 coordinates Mg(2+). A switch-I region spans residues 58-66 (CACQATVGI). Mg(2+) contacts are provided by T63 and D86. GTP contacts are provided by G89, N144, K145, D147, S174, A175, and K176. Residues 89–105 (GQERFHSLIPSYIRDST) form a switch-II region. Residue C222 is the site of S-geranylgeranyl cysteine attachment.

The protein belongs to the small GTPase superfamily. Rab family. It depends on Mg(2+) as a cofactor. As to expression, widely expressed in brain, testis, lung, heart, ovary, colon, kidney, uterus and spleen but not in liver.

The protein resides in the cytoplasm. It catalyses the reaction GTP + H2O = GDP + phosphate + H(+). Its activity is regulated as follows. Regulated by guanine nucleotide exchange factors (GEFs) which promote the exchange of bound GDP for free GTP. Regulated by GTPase activating proteins (GAPs) which increase the GTP hydrolysis activity. Inhibited by GDP dissociation inhibitors (GDIs). The small GTPases Rab are key regulators of intracellular membrane trafficking, from the formation of transport vesicles to their fusion with membranes. Rabs cycle between an inactive GDP-bound form and an active GTP-bound form that is able to recruit to membranes different sets of downstream effectors directly responsible for vesicle formation, movement, tethering and fusion. RAB41 is required for normal Golgi ribbon organization and ER-to-Golgi trafficking. This chain is Ras-related protein Rab-41, found in Homo sapiens (Human).